The sequence spans 142 residues: Large ribosomal subunit protein uL13 (142 aa).

The protein belongs to the universal ribosomal protein uL13 family. As to quaternary structure, part of the 50S ribosomal subunit.

This protein is one of the early assembly proteins of the 50S ribosomal subunit, although it is not seen to bind rRNA by itself. It is important during the early stages of 50S assembly. The polypeptide is Large ribosomal subunit protein uL13 (Halorhodospira halophila (strain DSM 244 / SL1) (Ectothiorhodospira halophila (strain DSM 244 / SL1))).